Reading from the N-terminus, the 127-residue chain is PanD regulatory factor (127 aa).

Residues 1–127 (MKLTILRLEH…TAQHDGWEKR (127 aa)) form the N-acetyltransferase domain. Residues 66–68 (LRV) and 72–79 (TRRRGVGQ) each bind CoA.

This sequence belongs to the PanZ/PanM family. As to quaternary structure, interacts with PanD in the presence of CoA. Monomer.

Controls both the activation and catalytic activity of PanD in a coenzyme A (CoA)-dependent fashion. Binding of CoA or a derivative to PanM leads to interaction with PanD, which promotes the processing and activation of pro-PanD, and subsequent substrate-mediated inhibition of the active form of PanD. Lacks acetyltransferase activity. This Salmonella typhimurium (strain LT2 / SGSC1412 / ATCC 700720) protein is PanD regulatory factor.